The chain runs to 513 residues: HTH-type transcriptional regulatory protein TyrR (513 aa).

Positions 2–72 (RLEVFCEDRL…GVTDVRTVPW (71 aa)) constitute an ACT domain. The PAS domain occupies 78–114 (EHLALSALLEALPEPVLSVDMKSKVDMANPASCQLFG). One can recognise a Sigma-54 factor interaction domain in the interval 206-428 (IVAVSPKMKH…LKNAIYRALT (223 aa)). ATP contacts are provided by residues 234 to 241 (GDTGTGKD) and 290 to 299 (ANGGSVLLDE). A DNA-binding region (H-T-H motif) is located at residues 482-502 (STRKLAKRLGVSHTAIANKLR).

Homodimer. In presence of tyrosine (or high concentrations of phenylalanine or tryptophan) and ATP, it self-associates to form an hexamer. At low tyrosine concentrations, homodimers can bind to certain recognition sequences referred to as 'strong TyrR boxes'. Homohexamers are the active repressing species, interacting with two or three tyrR boxes in the targeted regulatory DNA, including 'strong TyrR boxes' and lower-affinity sites called 'weak TyrR boxes'.

The protein localises to the cytoplasm. Binding of ATP strongly enhances the affinity of TyrR for tyrosine. Functionally, dual transcriptional regulator of the TyrR regulon, which includes a number of genes coding for proteins involved in the biosynthesis or transport of the three aromatic amino acids, phenylalanine, tyrosine and tryptophan. These three aromatic amino acids act as effectors which bind to the TyrR protein to form an active regulatory protein. Modulates the expression of at least eight unlinked transcription units, including aroF, aroG, aroLM, aroP, mtr, tyrA, tyrB and tyrP. In most cases TyrR acts as a repressor, but positive effects have been observed on the tyrP gene, which is repressed in the presence of tyrosine and activated at high phenylalanine concentrations. Is also involved in activation, but not repression, of mtr expression in association with phenylalanine or tyrosine. Acts by binding specifically to TyrR boxes in the promoter region of the target genes. The polypeptide is HTH-type transcriptional regulatory protein TyrR (Escherichia coli (strain K12)).